The primary structure comprises 342 residues: Ferredoxin--NADP reductase (342 aa).

Residues C17, D36, Q44, Y49, V89, F124, D289, and T330 each contribute to the FAD site.

The protein belongs to the ferredoxin--NADP reductase type 2 family. Homodimer. The cofactor is FAD.

The enzyme catalyses 2 reduced [2Fe-2S]-[ferredoxin] + NADP(+) + H(+) = 2 oxidized [2Fe-2S]-[ferredoxin] + NADPH. In Bradyrhizobium sp. (strain ORS 278), this protein is Ferredoxin--NADP reductase.